The following is a 412-amino-acid chain: CCA-adding enzyme (412 aa).

Residues S41 and K44 each coordinate ATP. CTP is bound by residues S41 and K44. Mg(2+) is bound by residues D53, D55, and D106. 3 residues coordinate ATP: H129, K149, and Y158. CTP contacts are provided by H129, K149, and Y158.

This sequence belongs to the tRNA nucleotidyltransferase/poly(A) polymerase family. Archaeal CCA-adding enzyme subfamily. Homodimer. The cofactor is Mg(2+).

The catalysed reaction is a tRNA precursor + 2 CTP + ATP = a tRNA with a 3' CCA end + 3 diphosphate. The enzyme catalyses a tRNA with a 3' CCA end + 2 CTP + ATP = a tRNA with a 3' CCACCA end + 3 diphosphate. Functionally, catalyzes the addition and repair of the essential 3'-terminal CCA sequence in tRNAs without using a nucleic acid template. Adds these three nucleotides in the order of C, C, and A to the tRNA nucleotide-73, using CTP and ATP as substrates and producing inorganic pyrophosphate. tRNA 3'-terminal CCA addition is required both for tRNA processing and repair. Also involved in tRNA surveillance by mediating tandem CCA addition to generate a CCACCA at the 3' terminus of unstable tRNAs. While stable tRNAs receive only 3'-terminal CCA, unstable tRNAs are marked with CCACCA and rapidly degraded. This is CCA-adding enzyme from Saccharolobus solfataricus (strain ATCC 35092 / DSM 1617 / JCM 11322 / P2) (Sulfolobus solfataricus).